The sequence spans 113 residues: Large ribosomal subunit protein eL31 (113 aa).

It belongs to the eukaryotic ribosomal protein eL31 family. As to quaternary structure, component of the large ribosomal subunit (LSU). Mature yeast ribosomes consist of a small (40S) and a large (60S) subunit. The 40S small subunit contains 1 molecule of ribosomal RNA (18S rRNA) and at least 33 different proteins. The large 60S subunit contains 3 rRNA molecules (25S, 5.8S and 5S rRNA) and at least 46 different proteins.

The protein localises to the cytoplasm. Its function is as follows. Component of the ribosome, a large ribonucleoprotein complex responsible for the synthesis of proteins in the cell. The small ribosomal subunit (SSU) binds messenger RNAs (mRNAs) and translates the encoded message by selecting cognate aminoacyl-transfer RNA (tRNA) molecules. The large subunit (LSU) contains the ribosomal catalytic site termed the peptidyl transferase center (PTC), which catalyzes the formation of peptide bonds, thereby polymerizing the amino acids delivered by tRNAs into a polypeptide chain. The nascent polypeptides leave the ribosome through a tunnel in the LSU and interact with protein factors that function in enzymatic processing, targeting, and the membrane insertion of nascent chains at the exit of the ribosomal tunnel. This is Large ribosomal subunit protein eL31 (rpl31) from Schizosaccharomyces pombe (strain 972 / ATCC 24843) (Fission yeast).